A 107-amino-acid polypeptide reads, in one-letter code: MPKLARKQQKNLIQNIAVQRMQRLFELAKAEFPENPERSRRYVQLIRNISMRNRISIPRDIKSRICKHCYAFLVPGSNARYRLKNGYLVISCEQCGKEMRYPYKKLK.

The Zn(2+) site is built by Cys66, Cys69, Cys92, and Cys95.

Belongs to the eukaryotic/archaeal RNase P protein component 4 family. In terms of assembly, consists of a catalytic RNA component and at least 4-5 protein subunits. Requires Zn(2+) as cofactor.

The protein localises to the cytoplasm. It carries out the reaction Endonucleolytic cleavage of RNA, removing 5'-extranucleotides from tRNA precursor.. Part of ribonuclease P, a protein complex that generates mature tRNA molecules by cleaving their 5'-ends. The protein is Ribonuclease P protein component 4 of Methanosarcina acetivorans (strain ATCC 35395 / DSM 2834 / JCM 12185 / C2A).